Consider the following 180-residue polypeptide: Large ribosomal subunit protein uL5 (180 aa).

It belongs to the universal ribosomal protein uL5 family. In terms of assembly, part of the 50S ribosomal subunit; part of the 5S rRNA/L5/L18/L25 subcomplex. Contacts the 5S rRNA and the P site tRNA. Forms a bridge to the 30S subunit in the 70S ribosome.

In terms of biological role, this is one of the proteins that bind and probably mediate the attachment of the 5S RNA into the large ribosomal subunit, where it forms part of the central protuberance. In the 70S ribosome it contacts protein S13 of the 30S subunit (bridge B1b), connecting the 2 subunits; this bridge is implicated in subunit movement. Contacts the P site tRNA; the 5S rRNA and some of its associated proteins might help stabilize positioning of ribosome-bound tRNAs. The sequence is that of Large ribosomal subunit protein uL5 from Leuconostoc citreum (strain KM20).